Reading from the N-terminus, the 293-residue chain is 33 kDa chaperonin (293 aa).

2 disulfide bridges follow: C238/C240 and C271/C274.

The protein belongs to the HSP33 family. In terms of processing, under oxidizing conditions two disulfide bonds are formed involving the reactive cysteines. Under reducing conditions zinc is bound to the reactive cysteines and the protein is inactive.

Its subcellular location is the cytoplasm. Its function is as follows. Redox regulated molecular chaperone. Protects both thermally unfolding and oxidatively damaged proteins from irreversible aggregation. Plays an important role in the bacterial defense system toward oxidative stress. The polypeptide is 33 kDa chaperonin (Clostridium beijerinckii (strain ATCC 51743 / NCIMB 8052) (Clostridium acetobutylicum)).